The chain runs to 95 residues: PqqA binding protein (95 aa).

Belongs to the PqqD family. As to quaternary structure, monomer. Interacts with PqqE.

It functions in the pathway cofactor biosynthesis; pyrroloquinoline quinone biosynthesis. In terms of biological role, functions as a PqqA binding protein and presents PqqA to PqqE, in the pyrroloquinoline quinone (PQQ) biosynthetic pathway. The chain is PqqA binding protein from Rahnella aquatilis.